A 461-amino-acid chain; its full sequence is tRNA modification GTPase MnmE (461 aa).

Residues Arg20, Glu85, and Lys124 each contribute to the (6S)-5-formyl-5,6,7,8-tetrahydrofolate site. The TrmE-type G domain maps to 221–383 (GIPVAIIGET…LQQLLTEVSS (163 aa)). Residue Asn231 coordinates K(+). GTP contacts are provided by residues 231–236 (NAGKST), 250–256 (SDIHGTT), and 275–278 (DTAG). Ser235 serves as a coordination point for Mg(2+). Residues Ser250, Ile252, and Thr255 each coordinate K(+). Residue Thr256 coordinates Mg(2+). Lys461 provides a ligand contact to (6S)-5-formyl-5,6,7,8-tetrahydrofolate.

The protein belongs to the TRAFAC class TrmE-Era-EngA-EngB-Septin-like GTPase superfamily. TrmE GTPase family. As to quaternary structure, homodimer. Heterotetramer of two MnmE and two MnmG subunits. It depends on K(+) as a cofactor.

It localises to the cytoplasm. Exhibits a very high intrinsic GTPase hydrolysis rate. Involved in the addition of a carboxymethylaminomethyl (cmnm) group at the wobble position (U34) of certain tRNAs, forming tRNA-cmnm(5)s(2)U34. The protein is tRNA modification GTPase MnmE of Parabacteroides distasonis (strain ATCC 8503 / DSM 20701 / CIP 104284 / JCM 5825 / NCTC 11152).